The following is a 264-amino-acid chain: Exodeoxyribonuclease YycJ (264 aa).

5 residues coordinate a divalent metal cation: His-58, His-60, Asp-62, His-63, and Asp-145.

This sequence belongs to the metallo-beta-lactamase superfamily. The cofactor is Fe(2+). Zn(2+) serves as cofactor. Requires Mn(2+) as cofactor.

Its function is as follows. 5'-&gt;3' double-stranded DNA exonuclease. May play a role in mutation mismatch repair (MMR). Required for accurate coordination of cell division with DNA replication. May play a role in cell wall metabolism. This Bacillus anthracis protein is Exodeoxyribonuclease YycJ.